Consider the following 295-residue polypeptide: sn-glycerol-3-phosphate transport system permease protein UgpA (295 aa).

Over 1–11 the chain is Cytoplasmic; the sequence is MSSSRPVFRSR. A helical transmembrane segment spans residues 12-32; sequence WLPYLLVAPQLIITVIFFIWP. Topologically, residues 33–80 are periplasmic; sequence AGEALWYSLQSVDPFGFSSQFVGLDNFVTLFHDSYYLDAFWTTIKFST. Residues 76–284 form the ABC transmembrane type-1 domain; the sequence is IKFSTFVTVS…FLVIVLTVVQ (209 aa). Residues 81–101 form a helical membrane-spanning segment; it reads FVTVSGLLVSLFFAALVEYIV. Residues 102–109 are Cytoplasmic-facing; sequence RGSRFYQT. The helical transmembrane segment at 110-130 threads the bilayer; it reads LMLLPYAVAPAVAAVLWIFLF. The Periplasmic portion of the chain corresponds to 131–156; that stretch reads NPGRGLITHFLAEFGYDWNHAQNSGQ. A helical membrane pass occupies residues 157-177; the sequence is AMFLVVFASVWKQISYNFLFF. Over 178–207 the chain is Cytoplasmic; that stretch reads YAALQSIPRSLIEAAAIDGAGPIRRFFKIA. A helical membrane pass occupies residues 208-228; sequence LPLIAPVSFFLLVVNLVYAFF. Residues 229-262 lie on the Periplasmic side of the membrane; the sequence is DTFPVIDAATSGGPVQATTTLIYKIYREGFTGLD. Residues 263–283 traverse the membrane as a helical segment; it reads LASSAAQSVVLMFLVIVLTVV. Topologically, residues 284 to 295 are cytoplasmic; it reads QFRYVESKVRYQ.

The protein belongs to the binding-protein-dependent transport system permease family. UgpAE subfamily. In terms of assembly, the complex is composed of two ATP-binding proteins (UgpC), two transmembrane proteins (UgpA and UgpE) and a solute-binding protein (UgpB).

The protein localises to the cell inner membrane. Its function is as follows. Part of the ABC transporter complex UgpBAEC involved in sn-glycerol-3-phosphate (G3P) import. Probably responsible for the translocation of the substrate across the membrane. The protein is sn-glycerol-3-phosphate transport system permease protein UgpA (ugpA) of Escherichia coli (strain UTI89 / UPEC).